The chain runs to 375 residues: Period circadian protein (375 aa).

Disordered stretches follow at residues 28–118 (TAPV…AVTP), 140–189 (KHRE…WEGE), and 220–254 (CQASGAGGGGSGSVGGTGNIGSGGSNAQPSTNQYA). Residues 69 to 91 (SGNFTTGSNLHMSSVTNTSNAGT) show a composition bias toward low complexity. The segment covering 92 to 113 (GTSGTGNSGGGGGGGGGGGPGN) has biased composition (gly residues). Positions 145 to 156 (RGRSGEKNKKSA) are enriched in basic and acidic residues. The segment covering 224 to 243 (GAGGGGSGSVGGTGNIGSGG) has biased composition (gly residues). Positions 245–254 (NAQPSTNQYA) are enriched in polar residues.

As to quaternary structure, forms a heterodimer with timeless (TIM); the complex then translocates into the nucleus. Post-translationally, phosphorylated with a circadian rhythmicity, probably by the double-time protein (dbt). Phosphorylation could be implicated in the stability of per monomer and in the formation of heterodimer per-tim.

The protein resides in the nucleus. It is found in the cytoplasm. It localises to the perinuclear region. In terms of biological role, essential for biological clock functions. Determines the period length of circadian and ultradian rhythms; an increase in PER dosage leads to shortened circadian rhythms and a decrease leads to lengthened circadian rhythms. Essential for the circadian rhythmicity of locomotor activity, eclosion behavior, and for the rhythmic component of the male courtship song that originates in the thoracic nervous system. The biological cycle depends on the rhythmic formation and nuclear localization of the TIM-PER complex. Light induces the degradation of TIM, which promotes elimination of PER. Nuclear activity of the heterodimer coordinatively regulates PER and TIM transcription through a negative feedback loop. Behaves as a negative element in circadian transcriptional loop. Does not appear to bind DNA, suggesting indirect transcriptional inhibition. This Drosophila capricorni (Fruit fly) protein is Period circadian protein (per).